We begin with the raw amino-acid sequence, 685 residues long: Sodium-dependent phosphate transporter 1 (685 aa).

6 helical membrane-spanning segments follow: residues phenylalanine 25–alanine 45, alanine 66–serine 86, leucine 106–phenylalanine 126, isoleucine 162–tyrosine 182, alanine 201–glycine 221, and glycine 234–valine 254. The segment covering valine 482–isoleucine 492 has biased composition (acidic residues). The tract at residues valine 482 to aspartate 513 is disordered. Residues alanine 496–aspartate 513 show a composition bias toward basic and acidic residues. Helical transmembrane passes span valine 517 to glycine 537, alanine 565 to tryptophan 585, phenylalanine 606 to isoleucine 626, and isoleucine 656 to alanine 676.

It belongs to the inorganic phosphate transporter (PiT) (TC 2.A.20) family.

The protein resides in the cell membrane. It catalyses the reaction 2 Na(+)(out) + phosphate(out) = 2 Na(+)(in) + phosphate(in). Its function is as follows. Sodium-phosphate symporter which preferentially transports the monovalent form of phosphate with a stoichiometry of two sodium ions per phosphate ion. This Xenopus tropicalis (Western clawed frog) protein is Sodium-dependent phosphate transporter 1 (slc20a1).